We begin with the raw amino-acid sequence, 529 residues long: hal-like protein DDB_G0273787/DDB_G0273081 (529 aa).

The 5-imidazolinone (Ala-Gly) cross-link spans 151-153 (ASG). At Ser-152 the chain carries 2,3-didehydroalanine (Ser).

This sequence belongs to the PAL/histidase family. In terms of processing, contains an active site 4-methylidene-imidazol-5-one (MIO), which is formed autocatalytically by cyclization and dehydration of residues Ala-Ser-Gly.

The protein localises to the cytoplasm. It catalyses the reaction L-histidine = trans-urocanate + NH4(+). It functions in the pathway amino-acid degradation; L-histidine degradation into L-glutamate; N-formimidoyl-L-glutamate from L-histidine: step 1/3. The sequence is that of hal-like protein DDB_G0273787/DDB_G0273081 from Dictyostelium discoideum (Social amoeba).